We begin with the raw amino-acid sequence, 689 residues long: Calcium-responsive transcription factor (689 aa).

Disordered stretches follow at residues 1–46 (MEQR…PTIL) and 541–609 (SPDG…SVPN). A compositionally biased stretch (basic and acidic residues) spans 13-29 (DGEKSEREAQGFEHRTC). Polar residues-rich tracts occupy residues 541 to 559 (SPDGSQALVSVDSHASSSP) and 578 to 601 (LGQSQNPGTDTCLTQDNSTSSSTG).

Highly expressed in brain and testis.

It is found in the nucleus. Acts as a transcriptional activator that mediates the calcium- and neuron-selective induction of BDNF exon III transcription. Binds to the consensus calcium-response element CaRE1 5'-CTATTTCGAG-3' sequence. The polypeptide is Calcium-responsive transcription factor (Carf) (Mus musculus (Mouse)).